We begin with the raw amino-acid sequence, 877 residues long: MAAERYNPRVAEAHWQKVWEENRTFETDNSDSREKYYVLEMFPYPSGRIHMGHVRNYAMGDVVARYKRAKGFNVLHPMGWDAFGMPAENAAMQNKVHPKEWTYQNIATMKRQLKSMGLSLDWSREFATCDVEYYHRQQMLFIDLYEKGLVTRKTSKVNWDPVDNTVLANEQVVDGRGWRSGALVEQRELTQWFFKITDFSEELLAGLDTLDQWPEKVRLMQRNWIGKSEGLQVRFALAAGTAPAGFSEVEVYTTRPDTLFGAAFVAISADHPLAKKLSEGNAALSSFIEECHQQGTSLAALETAEKKGFDTGIKVKHPFDDNWELPVYVANFVLMEYGTGAVFGCPAHDQRDLDFANKYKLKVTPVVLPKGEDAASFSIGETAYTDDGVMINSRFLDGMTPEAAFNEVASRLEKTDLVGRPQAVRKVQFRLRDWGISRQRYWGCPIPMIHCESCGVNPVPRADLPVKLPDDVEFDRPGNPLDRHATWRHVKCPKCGGDARRETDTMDTFVDSSWYYTRFTAPWENEPTNRKAADHWLPVDQYIGGIEHAILHLLYSRFFTRAMKVAGHVGVDEPFKGLFTQGMVVHETYKANGQWVSPADIRIEEIDGKRVATMLDSGAPVEIGSIEKMSKSKKNVVDPDDIIASYGADTARWFVLSDSPPERDVIWTEAGAEGAHRFVQRIWRLVAEAAPALKDVAPKAGTQGEALGVSKAVHKAVKAVGDDIEKLAFNRGVARLYELVNTLSGALQQAADGKADAEMKGALREATEMLVLMTAPMMPHLAEQCLAELGGKVAGKETLVARAPWPVFDPALVVENEIVLPVQINGKKRGDLTIARDADQASIQQAVLELDFVKAALNGGSPKKIIVVPQRIVNVVA.

The 'HIGH' region motif lies at 43-53 (PYPSGRIHMGH). Positions 628-632 (KMSKS) match the 'KMSKS' region motif. An ATP-binding site is contributed by K631.

The protein belongs to the class-I aminoacyl-tRNA synthetase family.

Its subcellular location is the cytoplasm. It carries out the reaction tRNA(Leu) + L-leucine + ATP = L-leucyl-tRNA(Leu) + AMP + diphosphate. In Brucella abortus (strain S19), this protein is Leucine--tRNA ligase.